The primary structure comprises 349 residues: Aspartate carbamoyltransferase catalytic subunit (349 aa).

Carbamoyl phosphate contacts are provided by R59 and T60. Residue K87 participates in L-aspartate binding. Residues R109, H142, and Q145 each contribute to the carbamoyl phosphate site. L-aspartate-binding residues include R182 and R253. G294 and P295 together coordinate carbamoyl phosphate.

This sequence belongs to the aspartate/ornithine carbamoyltransferase superfamily. ATCase family. Heterododecamer (2C3:3R2) of six catalytic PyrB chains organized as two trimers (C3), and six regulatory PyrI chains organized as three dimers (R2).

The catalysed reaction is carbamoyl phosphate + L-aspartate = N-carbamoyl-L-aspartate + phosphate + H(+). Its pathway is pyrimidine metabolism; UMP biosynthesis via de novo pathway; (S)-dihydroorotate from bicarbonate: step 2/3. Functionally, catalyzes the condensation of carbamoyl phosphate and aspartate to form carbamoyl aspartate and inorganic phosphate, the committed step in the de novo pyrimidine nucleotide biosynthesis pathway. In Synechococcus sp. (strain CC9311), this protein is Aspartate carbamoyltransferase catalytic subunit.